The following is a 131-amino-acid chain: Large ribosomal subunit protein bL17 (131 aa).

This sequence belongs to the bacterial ribosomal protein bL17 family. Part of the 50S ribosomal subunit. Contacts protein L32.

This chain is Large ribosomal subunit protein bL17, found in Methylobacillus flagellatus (strain ATCC 51484 / DSM 6875 / VKM B-1610 / KT).